The sequence spans 277 residues: Bis(5'-nucleosyl)-tetraphosphatase, symmetrical (277 aa).

It belongs to the Ap4A hydrolase family.

The catalysed reaction is P(1),P(4)-bis(5'-adenosyl) tetraphosphate + H2O = 2 ADP + 2 H(+). In terms of biological role, hydrolyzes diadenosine 5',5'''-P1,P4-tetraphosphate to yield ADP. In Chromobacterium violaceum (strain ATCC 12472 / DSM 30191 / JCM 1249 / CCUG 213 / NBRC 12614 / NCIMB 9131 / NCTC 9757 / MK), this protein is Bis(5'-nucleosyl)-tetraphosphatase, symmetrical.